The primary structure comprises 1347 residues: Protein HUA2-LIKE 3 (1347 aa).

In terms of domain architecture, PWWP spans 24 to 81 (VGDLVLAKVKGFPAWPAVVDEPEKWGHSADSKKVTVHFFGTQQIAFCNHGDVESFTEE). Disordered regions lie at residues 110-137 (KLKQQDQASGPKYAEETTAGSSGNTSQL), 251-320 (DGGP…SGSK), and 383-402 (DSCQRSQNSHERLNERPCEE). The segment covering 127-137 (TAGSSGNTSQL) has biased composition (polar residues). The span at 302–314 (VESNNNSRNEGNG) shows a compositional bias: low complexity. A compositionally biased stretch (basic and acidic residues) spans 390–402 (NSHERLNERPCEE). One can recognise a CID domain in the interval 845 to 986 (DVQCTVESFE…HHIRELDSLS (142 aa)). Disordered stretches follow at residues 1037–1069 (RDEDEGSDSDGGDFESVTPEHESRSLEEHVTPS), 1121–1140 (TSHQNVTSSSPPARPSQNAQ), 1147–1223 (YSNG…YSYM), and 1259–1347 (RMRP…WHQR). Positions 1038–1049 (DEDEGSDSDGGD) are enriched in acidic residues. Over residues 1054–1069 (TPEHESRSLEEHVTPS) the composition is skewed to basic and acidic residues. Residues 1181 to 1191 (PSYSSRVSLSK) are compositionally biased toward polar residues. A compositionally biased stretch (pro residues) spans 1208-1217 (SSHPPPPPPS). Residues 1259–1272 (RMRPEPCENRDNWR) are compositionally biased toward basic and acidic residues.

As to expression, expressed throughout young primordia, and vegetative and reproductive apices.

Its subcellular location is the nucleus. Probable transcription factor that acts with partial redundancy with HULK1 and HULK2. Plays diverse and essential roles in the control of plant development, physiology and flowering time. This Arabidopsis thaliana (Mouse-ear cress) protein is Protein HUA2-LIKE 3.